Consider the following 181-residue polypeptide: 6,7-dimethyl-8-ribityllumazine synthase (181 aa).

Residues Tyr-27, 58–60, and 87–89 contribute to the 5-amino-6-(D-ribitylamino)uracil site; these read ALE and CVI. 92-93 is a (2S)-2-hydroxy-3-oxobutyl phosphate binding site; it reads ET. His-95 acts as the Proton donor in catalysis. Asn-120 is a 5-amino-6-(D-ribitylamino)uracil binding site. Position 134 (Arg-134) interacts with (2S)-2-hydroxy-3-oxobutyl phosphate.

Belongs to the DMRL synthase family.

The catalysed reaction is (2S)-2-hydroxy-3-oxobutyl phosphate + 5-amino-6-(D-ribitylamino)uracil = 6,7-dimethyl-8-(1-D-ribityl)lumazine + phosphate + 2 H2O + H(+). The protein operates within cofactor biosynthesis; riboflavin biosynthesis; riboflavin from 2-hydroxy-3-oxobutyl phosphate and 5-amino-6-(D-ribitylamino)uracil: step 1/2. Its function is as follows. Catalyzes the formation of 6,7-dimethyl-8-ribityllumazine by condensation of 5-amino-6-(D-ribitylamino)uracil with 3,4-dihydroxy-2-butanone 4-phosphate. This is the penultimate step in the biosynthesis of riboflavin. The chain is 6,7-dimethyl-8-ribityllumazine synthase from Methylobacterium nodulans (strain LMG 21967 / CNCM I-2342 / ORS 2060).